We begin with the raw amino-acid sequence, 363 residues long: Aminomethyltransferase (363 aa).

This sequence belongs to the GcvT family. As to quaternary structure, the glycine cleavage system is composed of four proteins: P, T, L and H.

The enzyme catalyses N(6)-[(R)-S(8)-aminomethyldihydrolipoyl]-L-lysyl-[protein] + (6S)-5,6,7,8-tetrahydrofolate = N(6)-[(R)-dihydrolipoyl]-L-lysyl-[protein] + (6R)-5,10-methylene-5,6,7,8-tetrahydrofolate + NH4(+). In terms of biological role, the glycine cleavage system catalyzes the degradation of glycine. This Nitrosomonas europaea (strain ATCC 19718 / CIP 103999 / KCTC 2705 / NBRC 14298) protein is Aminomethyltransferase.